Consider the following 67-residue polypeptide: Probable Sec-independent protein translocase protein TatE (67 aa).

Residues 4-21 traverse the membrane as a helical segment; the sequence is ISITKLLVVAALVVLLFG.

It belongs to the TatA/E family. TatE subfamily.

The protein localises to the cell inner membrane. Part of the twin-arginine translocation (Tat) system that transports large folded proteins containing a characteristic twin-arginine motif in their signal peptide across membranes. TatE shares overlapping functions with TatA. The polypeptide is Probable Sec-independent protein translocase protein TatE (Salmonella dublin (strain CT_02021853)).